The following is a 1042-amino-acid chain: Probable serine/threonine protein kinase IRE4 (1042 aa).

Composition is skewed to basic and acidic residues over residues 1–10 (MAEENRKDRG), 102–115 (EEIK…GKDE), and 314–327 (QRNE…RRDK). 3 disordered regions span residues 1-75 (MAEE…GTKL), 90-115 (PPKY…GKDE), and 297-327 (WGST…RRDK). The C2H2-type; atypical zinc finger occupies 402 to 421 (CRICEEEVPLFHLEPHSYIC). Positions 670-955 (FEIIKPISRG…AAEVKSHPFF (286 aa)) constitute a Protein kinase domain. Residues 676 to 684 (ISRGAFGKV) and Lys-699 each bind ATP. Asp-793 serves as the catalytic Proton acceptor. Residues 830–850 (ESDVSPRTNSHHFQKNQEEER) form a disordered region. Phosphoserine is present on Ser-854. Positions 956–1042 (QGVDWENLAL…KLFFLLLCVF (87 aa)) constitute an AGC-kinase C-terminal domain.

The protein belongs to the protein kinase superfamily. AGC Ser/Thr protein kinase family.

It carries out the reaction L-seryl-[protein] + ATP = O-phospho-L-seryl-[protein] + ADP + H(+). The catalysed reaction is L-threonyl-[protein] + ATP = O-phospho-L-threonyl-[protein] + ADP + H(+). This chain is Probable serine/threonine protein kinase IRE4, found in Arabidopsis thaliana (Mouse-ear cress).